A 291-amino-acid polypeptide reads, in one-letter code: MEMO1 family protein TON_0132 (291 aa).

Belongs to the MEMO1 family.

This chain is MEMO1 family protein TON_0132, found in Thermococcus onnurineus (strain NA1).